The chain runs to 170 residues: Crossover junction endodeoxyribonuclease RuvC (170 aa).

Residues Asp-11, Glu-71, and Asp-143 contribute to the active site. 3 residues coordinate Mg(2+): Asp-11, Glu-71, and Asp-143.

The protein belongs to the RuvC family. Homodimer which binds Holliday junction (HJ) DNA. The HJ becomes 2-fold symmetrical on binding to RuvC with unstacked arms; it has a different conformation from HJ DNA in complex with RuvA. In the full resolvosome a probable DNA-RuvA(4)-RuvB(12)-RuvC(2) complex forms which resolves the HJ. Mg(2+) is required as a cofactor.

It localises to the cytoplasm. It catalyses the reaction Endonucleolytic cleavage at a junction such as a reciprocal single-stranded crossover between two homologous DNA duplexes (Holliday junction).. Its function is as follows. The RuvA-RuvB-RuvC complex processes Holliday junction (HJ) DNA during genetic recombination and DNA repair. Endonuclease that resolves HJ intermediates. Cleaves cruciform DNA by making single-stranded nicks across the HJ at symmetrical positions within the homologous arms, yielding a 5'-phosphate and a 3'-hydroxyl group; requires a central core of homology in the junction. The consensus cleavage sequence is 5'-(A/T)TT(C/G)-3'. Cleavage occurs on the 3'-side of the TT dinucleotide at the point of strand exchange. HJ branch migration catalyzed by RuvA-RuvB allows RuvC to scan DNA until it finds its consensus sequence, where it cleaves and resolves the cruciform DNA. The polypeptide is Crossover junction endodeoxyribonuclease RuvC (Rhizobium rhizogenes (strain K84 / ATCC BAA-868) (Agrobacterium radiobacter)).